Consider the following 166-residue polypeptide: Phospholipase A2 inhibitor (166 aa).

Positions 1-19 (MRLILLSGLLLLGIFLANG) are cleaved as a signal peptide. In terms of domain architecture, C-type lectin spans 46-161 (LKGSFLIVHK…CDDNLLVVCE (116 aa)). Cystine bridges form between C83–C160 and C138–C152. N122 carries N-linked (GlcNAc...) asparagine glycosylation.

Belongs to the alpha-type phospholipase A2 inhibitor family. Homotrimer; non-covalently linked. As to expression, expressed by the liver.

The protein resides in the secreted. Its function is as follows. This phospholipase A2 inhibitor binds directly phospholipase A2 in the presence or absence of calcium. The chain is Phospholipase A2 inhibitor from Bothrops jararacussu (Jararacussu).